A 173-amino-acid polypeptide reads, in one-letter code: Cytochrome c-type biogenesis protein CcmE (173 aa).

Residues 1–8 (MNPRRKSR) are Cytoplasmic-facing. Residues 9–29 (FKLVIFVVLGIAIASGLMLYA) traverse the membrane as a helical; Signal-anchor for type II membrane protein segment. Over 30-173 (LRQNIDLFYT…RDRQEKEGAK (144 aa)) the chain is Periplasmic. His131 and Tyr135 together coordinate heme. The tract at residues 152-173 (GIEAADLKGESARDRQEKEGAK) is disordered. Basic and acidic residues predominate over residues 156-173 (ADLKGESARDRQEKEGAK).

This sequence belongs to the CcmE/CycJ family.

It is found in the cell inner membrane. Heme chaperone required for the biogenesis of c-type cytochromes. Transiently binds heme delivered by CcmC and transfers the heme to apo-cytochromes in a process facilitated by CcmF and CcmH. The polypeptide is Cytochrome c-type biogenesis protein CcmE (Haemophilus influenzae (strain ATCC 51907 / DSM 11121 / KW20 / Rd)).